The chain runs to 158 residues: C-type lectin lectoxin-Enh5 (158 aa).

The first 23 residues, 1–23 (MGQFTVVSLGLLAVFLSLSGAKG), serve as a signal peptide directing secretion. Disulfide bonds link Cys-26/Cys-37, Cys-54/Cys-154, and Cys-129/Cys-146. One can recognise a C-type lectin domain in the interval 33–155 (RNGVCNKLFP…CASLHPFICQ (123 aa)). The Mannose-binding motif lies at 119–121 (EPN). 3 residues coordinate Ca(2+): Glu-127, Asn-142, and Asp-143.

The protein belongs to the true venom lectin family. As to expression, expressed by the venom gland.

It is found in the secreted. Its function is as follows. Mannose-binding lectin which recognizes specific carbohydrate structures and agglutinates a variety of animal cells by binding to cell-surface glycoproteins and glycolipids. May be a calcium-dependent lectin. The polypeptide is C-type lectin lectoxin-Enh5 (Pseudoferania polylepis (Macleay's water snake)).